Reading from the N-terminus, the 509-residue chain is Inositol-3-phosphate synthase 1 (509 aa).

Belongs to the myo-inositol 1-phosphate synthase family. NAD(+) serves as cofactor. As to expression, highly expressed in anthers, but transcripts are undetectable in roots, leaves, flowers and embryos.

It is found in the cytoplasm. The enzyme catalyses D-glucose 6-phosphate = 1D-myo-inositol 3-phosphate. It functions in the pathway polyol metabolism; myo-inositol biosynthesis; myo-inositol from D-glucose 6-phosphate: step 1/2. Key enzyme in myo-inositol biosynthesis pathway that catalyzes the conversion of glucose 6-phosphate to 1-myo-inositol 1-phosphate in a NAD-dependent manner. Is a key enzyme in the phytic acid biosynthesis pathway in seeds. This is Inositol-3-phosphate synthase 1 from Oryza sativa subsp. japonica (Rice).